Consider the following 126-residue polypeptide: Hydrogenase maturation factor HypA (126 aa).

His-2 provides a ligand contact to Ni(2+). Zn(2+) is bound by residues Cys-78, Cys-81, Cys-97, and Cys-100.

Belongs to the HypA/HybF family.

Involved in the maturation of [NiFe] hydrogenases. Required for nickel insertion into the metal center of the hydrogenase. The chain is Hydrogenase maturation factor HypA from Methanococcus maripaludis (strain C5 / ATCC BAA-1333).